The sequence spans 270 residues: Phospholysine phosphohistidine inorganic pyrophosphate phosphatase (270 aa).

Residues aspartate 17 and serine 19 each coordinate Mg(2+). Substrate-binding positions include 17 to 19 (DIS), 54 to 55 (TN), and lysine 189. A Mg(2+)-binding site is contributed by aspartate 214.

This sequence belongs to the HAD-like hydrolase superfamily. In terms of assembly, homodimer. Mg(2+) serves as cofactor.

It is found in the cytoplasm. The protein localises to the nucleus. It carries out the reaction diphosphate + H2O = 2 phosphate + H(+). Functionally, phosphatase that hydrolyzes imidodiphosphate, 3-phosphohistidine and 6-phospholysine. Has broad substrate specificity and can also hydrolyze inorganic diphosphate, but with lower efficiency. The protein is Phospholysine phosphohistidine inorganic pyrophosphate phosphatase (Lhpp) of Mus musculus (Mouse).